The following is a 235-amino-acid chain: Large ribosomal subunit protein uL1 (235 aa).

The protein belongs to the universal ribosomal protein uL1 family. Part of the 50S ribosomal subunit.

Functionally, binds directly to 23S rRNA. The L1 stalk is quite mobile in the ribosome, and is involved in E site tRNA release. In terms of biological role, protein L1 is also a translational repressor protein, it controls the translation of the L11 operon by binding to its mRNA. This chain is Large ribosomal subunit protein uL1, found in Methylibium petroleiphilum (strain ATCC BAA-1232 / LMG 22953 / PM1).